The sequence spans 171 residues: S-ribosylhomocysteine lyase (171 aa).

Fe cation is bound by residues His-54, His-58, and Cys-128.

It belongs to the LuxS family. In terms of assembly, homodimer. The cofactor is Fe cation.

It carries out the reaction S-(5-deoxy-D-ribos-5-yl)-L-homocysteine = (S)-4,5-dihydroxypentane-2,3-dione + L-homocysteine. Involved in the synthesis of autoinducer 2 (AI-2) which is secreted by bacteria and is used to communicate both the cell density and the metabolic potential of the environment. The regulation of gene expression in response to changes in cell density is called quorum sensing. Catalyzes the transformation of S-ribosylhomocysteine (RHC) to homocysteine (HC) and 4,5-dihydroxy-2,3-pentadione (DPD). The chain is S-ribosylhomocysteine lyase from Shigella boydii serotype 4 (strain Sb227).